Here is a 382-residue protein sequence, read N- to C-terminus: Probable protein phosphatase 2C 65 (382 aa).

The PPM-type phosphatase domain maps to 47-337 (HVSMSIKQGK…DDCAVVVLYL (291 aa)). The Mn(2+) site is built by Asp83 and Gly84. A disordered region spans residues 107-126 (KIRSSKSAGDENIENNSSQS). Mn(2+) is bound by residues Asp282 and Asp328.

It belongs to the PP2C family. The cofactor is Mg(2+). Mn(2+) serves as cofactor.

It carries out the reaction O-phospho-L-seryl-[protein] + H2O = L-seryl-[protein] + phosphate. It catalyses the reaction O-phospho-L-threonyl-[protein] + H2O = L-threonyl-[protein] + phosphate. In Arabidopsis thaliana (Mouse-ear cress), this protein is Probable protein phosphatase 2C 65.